Here is a 466-residue protein sequence, read N- to C-terminus: Cell division protein FtsP (466 aa).

The segment at residues 1-28 (MGNYSRRRFLQGSLAIVAGNVLPCAAMA) is a signal peptide (tat-type signal).

This sequence belongs to the FtsP family. In terms of processing, predicted to be exported by the Tat system. The position of the signal peptide cleavage has not been experimentally proven.

It is found in the periplasm. Cell division protein that is required for growth during stress conditions. May be involved in protecting or stabilizing the divisomal assembly under conditions of stress. This chain is Cell division protein FtsP, found in Gallibacterium anatis (strain UMN179) (Pasteurella anatis).